The primary structure comprises 204 residues: Protein C (204 aa).

The disordered stretch occupies residues 1-78 (MPSFLRGILK…TEQSQRRPKI (78 aa)). The span at 10–20 (KPKERHHENKN) shows a compositional bias: basic and acidic residues. Over residues 25 to 34 (SSDSLTSSYP) the composition is skewed to low complexity.

This sequence belongs to the respirovirus protein C family.

In Homo sapiens (Human), this protein is Protein C (P/V/C).